The following is a 293-amino-acid chain: 33 kDa chaperonin (293 aa).

Intrachain disulfides connect C236–C238 and C269–C272.

This sequence belongs to the HSP33 family. In terms of processing, under oxidizing conditions two disulfide bonds are formed involving the reactive cysteines. Under reducing conditions zinc is bound to the reactive cysteines and the protein is inactive.

The protein resides in the cytoplasm. Functionally, redox regulated molecular chaperone. Protects both thermally unfolding and oxidatively damaged proteins from irreversible aggregation. Plays an important role in the bacterial defense system toward oxidative stress. In Lactobacillus delbrueckii subsp. bulgaricus (strain ATCC BAA-365 / Lb-18), this protein is 33 kDa chaperonin.